The sequence spans 87 residues: Omega-lycotoxin-Am1c (87 aa).

A signal peptide spans 1–17 (MKLSIFFVLFFIAIAYC). A propeptide spanning residues 18-40 (QPEFLDDEEDEVEETLPVAEEGR) is cleaved from the precursor. 4 disulfide bridges follow: cysteine 44/cysteine 59, cysteine 51/cysteine 64, cysteine 58/cysteine 84, and cysteine 66/cysteine 82.

The protein belongs to the neurotoxin omega-lctx family. In terms of tissue distribution, expressed by the venom gland.

Its subcellular location is the secreted. Functionally, modulates Cav2.1/CACNA1A voltage-gated calcium channels (P/Q-type currents) in rat cerebellar Purkinje cells and hippocampal CA1-CA3 neurons. At saturating concentrations (&gt;10 nM) decelerates activation kinetics and slightly increases peak amplitude without affecting deactivation kinetics. In vivo, does not cause death when intravenously injected into mice. In rat models, through its activity on Cav2.1/CACNA1A, has an ameliorative effect on memory defects provoked by hyperstimulation of N-methyl-D-aspartate receptors (NMDARs) in the hippocampus. The sequence is that of Omega-lycotoxin-Am1c from Alopecosa marikovskyi (Wolf spider).